The chain runs to 228 residues: UPF0758 protein stu1465 (228 aa).

In terms of domain architecture, MPN spans Gln-103 to Asp-225. Residues His-174, His-176, and Asp-187 each coordinate Zn(2+). A JAMM motif motif is present at residues His-174–Asp-187.

It belongs to the UPF0758 family.

This chain is UPF0758 protein stu1465, found in Streptococcus thermophilus (strain ATCC BAA-250 / LMG 18311).